A 378-amino-acid chain; its full sequence is Beta sliding clamp (378 aa).

Belongs to the beta sliding clamp family. Forms a ring-shaped head-to-tail homodimer around DNA which binds and tethers DNA polymerases and other proteins to the DNA. The DNA replisome complex has a single clamp-loading complex (3 tau and 1 each of delta, delta', psi and chi subunits) which binds 3 Pol III cores (1 core on the leading strand and 2 on the lagging strand) each with a beta sliding clamp dimer. Additional proteins in the replisome are other copies of gamma, psi and chi, Ssb, DNA helicase and RNA primase. Interacts with YabA, and via YabA, with DnaA. During sporulation probably interacts with SirA.

The protein resides in the cytoplasm. Its subcellular location is the nucleoid. In terms of biological role, confers DNA tethering and processivity to DNA polymerases and other proteins. Acts as a clamp, forming a ring around DNA (a reaction catalyzed by the clamp-loading complex) which diffuses in an ATP-independent manner freely and bidirectionally along dsDNA. Initially characterized for its ability to contact the catalytic subunit of DNA polymerase III (Pol III), a complex, multichain enzyme responsible for most of the replicative synthesis in bacteria; Pol III exhibits 3'-5' exonuclease proofreading activity. The beta chain is required for initiation of replication as well as for processivity of DNA replication. Overexpression in vivo stimulates inititation of DNA replication from oriC. Increased levels of DnaN remove YabA from its association with DnaA on the chromosome, allowing DnaA to bind to its targets. Its interaction with DnaA probably serves as a sink to prevent excessive replication initiation. The polypeptide is Beta sliding clamp (Bacillus subtilis (strain 168)).